The primary structure comprises 111 residues: Heat shock 70 kDa protein (111 aa).

The protein belongs to the heat shock protein 70 family.

In Hydra oligactis (Brown hydra), this protein is Heat shock 70 kDa protein (HSP70).